We begin with the raw amino-acid sequence, 373 residues long: Phosphoserine aminotransferase (373 aa).

Residue arginine 46 coordinates L-glutamate. 4 residues coordinate pyridoxal 5'-phosphate: phenylalanine 104, threonine 150, aspartate 172, and glutamine 195. Lysine 196 bears the N6-(pyridoxal phosphate)lysine mark. 247-248 (NT) contributes to the pyridoxal 5'-phosphate binding site.

It belongs to the class-V pyridoxal-phosphate-dependent aminotransferase family. SerC subfamily. Homodimer. It depends on pyridoxal 5'-phosphate as a cofactor.

The protein resides in the cytoplasm. It carries out the reaction O-phospho-L-serine + 2-oxoglutarate = 3-phosphooxypyruvate + L-glutamate. The catalysed reaction is 4-(phosphooxy)-L-threonine + 2-oxoglutarate = (R)-3-hydroxy-2-oxo-4-phosphooxybutanoate + L-glutamate. The protein operates within amino-acid biosynthesis; L-serine biosynthesis; L-serine from 3-phospho-D-glycerate: step 2/3. It participates in cofactor biosynthesis; pyridoxine 5'-phosphate biosynthesis; pyridoxine 5'-phosphate from D-erythrose 4-phosphate: step 3/5. Its function is as follows. Catalyzes the reversible conversion of 3-phosphohydroxypyruvate to phosphoserine and of 3-hydroxy-2-oxo-4-phosphonooxybutanoate to phosphohydroxythreonine. This chain is Phosphoserine aminotransferase, found in Rhodococcus opacus (strain B4).